A 674-amino-acid chain; its full sequence is Acetyl-coenzyme A synthetase (674 aa).

CoA-binding positions include 201 to 204 (RGGR) and Thr-320. Residues 396 to 398 (GEP), 420 to 425 (DTYWQT), Asp-518, and Arg-533 each bind ATP. Position 541 (Ser-541) interacts with CoA. Arg-544 lines the ATP pocket. Position 603 (Arg-603) interacts with CoA.

Belongs to the ATP-dependent AMP-binding enzyme family.

The catalysed reaction is acetate + ATP + CoA = acetyl-CoA + AMP + diphosphate. In Dictyostelium discoideum (Social amoeba), this protein is Acetyl-coenzyme A synthetase (acsA).